A 282-amino-acid polypeptide reads, in one-letter code: Snake venom serine protease BmSP (282 aa).

A signal peptide spans 1–18 (MVLIGVLASLLILQLSYS). Residues 19 to 56 (KSLDDGAKESAYDDEIQQSSWGNSTVNTTLTETVVIQL) constitute a propeptide that is removed on maturation. Residues Asn41 and Asn45 are each glycosylated (N-linked (GlcNAc...) asparagine). In terms of domain architecture, Peptidase S1 spans 57–280 (IMGGSECYKS…YIDWIKGIIA (224 aa)). Intrachain disulfides connect Cys63–Cys195, Cys82–Cys98, Cys174–Cys241, Cys206–Cys220, and Cys231–Cys256. His97 serves as the catalytic Charge relay system. A glycan (N-linked (GlcNAc...) asparagine) is linked at Asn135. Asp142 acts as the Charge relay system in catalysis. Asn149 and Asn153 each carry an N-linked (GlcNAc...) asparagine glycan. Residue Ser235 is the Charge relay system of the active site.

It belongs to the peptidase S1 family. Snake venom subfamily. Monomer. Expressed by the venom gland.

Its subcellular location is the secreted. Its function is as follows. Snake venom serine protease that may act in the hemostasis system of the prey. This is Snake venom serine protease BmSP from Bungarus multicinctus (Many-banded krait).